Reading from the N-terminus, the 159-residue chain is NADH-quinone oxidoreductase subunit B (159 aa).

C36, C37, C102, and C132 together coordinate [4Fe-4S] cluster.

The protein belongs to the complex I 20 kDa subunit family. NDH-1 is composed of 14 different subunits. Subunits NuoB, C, D, E, F, and G constitute the peripheral sector of the complex. The cofactor is [4Fe-4S] cluster.

It localises to the cell inner membrane. The enzyme catalyses a quinone + NADH + 5 H(+)(in) = a quinol + NAD(+) + 4 H(+)(out). NDH-1 shuttles electrons from NADH, via FMN and iron-sulfur (Fe-S) centers, to quinones in the respiratory chain. Couples the redox reaction to proton translocation (for every two electrons transferred, four hydrogen ions are translocated across the cytoplasmic membrane), and thus conserves the redox energy in a proton gradient. The protein is NADH-quinone oxidoreductase subunit B of Delftia acidovorans (strain DSM 14801 / SPH-1).